Here is a 914-residue protein sequence, read N- to C-terminus: DNA mismatch repair protein MutS (914 aa).

The disordered stretch occupies residues 28–74; it reads NTNSVKDSNLNDEELSKNAELRPRKRKKSVLLQNSVGEQTEDFSNDE. 726-733 serves as a coordination point for ATP; it reads GPNASGKS.

The protein belongs to the DNA mismatch repair MutS family.

In terms of biological role, this protein is involved in the repair of mismatches in DNA. It is possible that it carries out the mismatch recognition step. This protein has a weak ATPase activity. The protein is DNA mismatch repair protein MutS of Prochlorococcus marinus (strain SARG / CCMP1375 / SS120).